We begin with the raw amino-acid sequence, 334 residues long: N-acetyl-gamma-glutamyl-phosphate reductase (334 aa).

Cysteine 142 is an active-site residue.

This sequence belongs to the NAGSA dehydrogenase family. Type 1 subfamily.

The protein localises to the cytoplasm. It catalyses the reaction N-acetyl-L-glutamate 5-semialdehyde + phosphate + NADP(+) = N-acetyl-L-glutamyl 5-phosphate + NADPH + H(+). It functions in the pathway amino-acid biosynthesis; L-arginine biosynthesis; N(2)-acetyl-L-ornithine from L-glutamate: step 3/4. Catalyzes the NADPH-dependent reduction of N-acetyl-5-glutamyl phosphate to yield N-acetyl-L-glutamate 5-semialdehyde. The protein is N-acetyl-gamma-glutamyl-phosphate reductase of Pelodictyon phaeoclathratiforme (strain DSM 5477 / BU-1).